A 590-amino-acid chain; its full sequence is Glypican-3 (590 aa).

An N-terminal signal peptide occupies residues 1 to 25 (MMPGLKLYGALILCVLVLPFSRPSS). 7 cysteine pairs are disulfide-bonded: C30–C67, C60–C255, C68–C258, C190–C342, C245–C278, C267–C418, and C271–C406. Residues N119 and N234 are each glycosylated (N-linked (GlcNAc...) asparagine). A glycan (N-linked (GlcNAc...) asparagine) is linked at N414. Disordered stretches follow at residues 429 to 450 (PGPGLKRVHPHGSESKQKTPEP) and 476 to 520 (WRAR…SGLG). Residues 495–513 (TDEDEEGLESGDCDDEDEC) are compositionally biased toward acidic residues. O-linked (Xyl...) (glycosaminoglycan) serine glycans are attached at residues S504 and S517.

This sequence belongs to the glypican family. As to quaternary structure, heterodimer; disulfide-linked. Cleavage by a furin-like convertase results in production of alpha and beta chains which form a disulfide-linked heterodimer. O-glycosylated; contains heparan sulfate and/or chondroitin sulfate. In terms of processing, cleaved intracellularly by a furin-like convertase to generate 2 subunits, alpha and beta, which remain associated through disulfide bonds and are associated with the cell surface via the GPI-anchor. This processing is essential for its role in inhibition of hedgehog signaling. A second proteolytic event may result in cleavage of the protein on the cell surface, separating it from the GPI-anchor and leading to its shedding from the cell surface. In terms of tissue distribution, maternally expressed and is almost ubiquitous during blastula and gastrula stages but becomes restricted to the prospective hindbrain by 24 hours post-fertilization.

It is found in the cell membrane. Cell surface proteoglycan. Negatively regulates the hedgehog signaling pathway. Positively regulates the canonical and non-canonical Wnt signaling pathways. Binds to CD81 which decreases the availability of free CD81 for binding to the transcriptional repressor HHEX, resulting in nuclear translocation of HHEX and transcriptional repression. Inhibits the dipeptidyl peptidase activity of DPP4. Plays a role in limb patterning and skeletal development. Modulates the effects of growth factors on renal branching morphogenesis. Required for coronary vascular development. Plays a role in regulating cell movements during gastrulation. This Danio rerio (Zebrafish) protein is Glypican-3.